Consider the following 637-residue polypeptide: uncharacterized protein (637 aa).

Positions 7–34 form a DNA-binding region, zn(2)-C6 fungal-type; the sequence is CDLCRLKKIKCSRGQPRCQTCTLFQADC. Residues 304 to 327 form a C2H2-type; degenerate zinc finger; it reads SLCRTLCGQACLMAQQLNLHRKQS.

Its subcellular location is the nucleus. This is an uncharacterized protein from Schizosaccharomyces pombe (strain 972 / ATCC 24843) (Fission yeast).